The chain runs to 367 residues: tRNA-specific 2-thiouridylase MnmA (367 aa).

Residues 12-19 and Met38 each bind ATP; that span reads GMSGGVDS. An interaction with target base in tRNA region spans residues 98-100; that stretch reads NPD. Residue Cys103 is the Nucleophile of the active site. A disulfide bridge links Cys103 with Cys200. An ATP-binding site is contributed by Gly128. The tract at residues 150-152 is interaction with tRNA; sequence KDQ. Residue Cys200 is the Cysteine persulfide intermediate of the active site. The interaction with tRNA stretch occupies residues 312 to 313; it reads RY.

This sequence belongs to the MnmA/TRMU family.

The protein resides in the cytoplasm. The enzyme catalyses S-sulfanyl-L-cysteinyl-[protein] + uridine(34) in tRNA + AH2 + ATP = 2-thiouridine(34) in tRNA + L-cysteinyl-[protein] + A + AMP + diphosphate + H(+). In terms of biological role, catalyzes the 2-thiolation of uridine at the wobble position (U34) of tRNA, leading to the formation of s(2)U34. The polypeptide is tRNA-specific 2-thiouridylase MnmA (Psychromonas ingrahamii (strain DSM 17664 / CCUG 51855 / 37)).